Here is a 291-residue protein sequence, read N- to C-terminus: Transcription factor bHLH53 (291 aa).

The region spanning 163–212 (PTLSSQSIAARGRRRRIAEKTHELGKLIPGGNKLNTAEMFQAAAKYVKFL) is the bHLH domain.

As to quaternary structure, homodimer. As to expression, expressed constitutively in roots, leaves, stems, and flowers.

It localises to the nucleus. The chain is Transcription factor bHLH53 (BHLH53) from Arabidopsis thaliana (Mouse-ear cress).